Consider the following 818-residue polypeptide: Dapper 1-A (818 aa).

Positions 1–10 (MKPIPSPEPP) are enriched in pro residues. Disordered stretches follow at residues 1–30 (MKPI…WERH), 60–80 (VLSP…PRSD), 122–144 (IDSE…LSDG), 455–486 (NVTP…SALL), and 510–530 (ESSS…SSSQ). Residues 1–337 (MKPIPSPEPP…PVRTNKPRTS (337 aa)) form an interaction with tcf7l1-A region. Residues 21-30 (DKGEAEWERH) show a composition bias toward basic and acidic residues. Residues 79–130 (SDEQKLLEENISLLKKQLNCLRKRDAGLLSQLHELDKQINDLKIDSEKTEET) are a coiled coil. Over residues 122-132 (IDSEKTEETDS) the composition is skewed to basic and acidic residues. Over residues 455–485 (NVTPNAPANLPNASSSVCNGSPRESTQNSAL) the composition is skewed to polar residues. The span at 512 to 524 (SSFEERPPLDFKS) shows a compositional bias: basic and acidic residues. The short motif at 815-818 (MTTV) is the PDZ-binding element.

The protein belongs to the dapper family. Interacts with dbf4 and tcf7l1-A. Interacts with dvl2/dsh via the C-terminus. In terms of tissue distribution, expressed in the animal and dorsal marginal regions at late blastula and early gastrula stages. Expressed predominantly in the anterior neural plate at neurulation. Expressed mainly in the ectodermal placodes, including the eye anlagen and the otic vesicle, at later stages of development.

It localises to the cytoplasm. The protein resides in the nucleus. Its function is as follows. Involved in regulation of intracellular signaling pathways during development. Specifically thought to play a role in canonical and/or non-canonical Wnt signaling pathways through interaction with DSH (Dishevelled) family proteins. Binds to dvl2/dsh and impedes the degradation of beta-catenin (ctnnb1-A and possibly ctnnb1-B), thereby enhancing the transcriptional activation of target genes of the Wnt signaling pathway. Also promotes catenin delta/ctnnd1 stability which in turn promotes zbtb33/kaiso sequestration and thus is involved in the regulation of zbtb33/kaiso-mediated transcriptional repression. May also bind to and directly stimulate the transcriptional activity of tcf7l1-A. Required for eye development and neural patterning. This is Dapper 1-A (dact1-a) from Xenopus laevis (African clawed frog).